The sequence spans 599 residues: Elongation factor 4 (599 aa).

The region spanning Lys2 to Glu184 is the tr-type G domain. GTP contacts are provided by residues Asp14 to Thr19 and Asn131 to Asp134.

The protein belongs to the TRAFAC class translation factor GTPase superfamily. Classic translation factor GTPase family. LepA subfamily.

It is found in the cell inner membrane. The catalysed reaction is GTP + H2O = GDP + phosphate + H(+). Functionally, required for accurate and efficient protein synthesis under certain stress conditions. May act as a fidelity factor of the translation reaction, by catalyzing a one-codon backward translocation of tRNAs on improperly translocated ribosomes. Back-translocation proceeds from a post-translocation (POST) complex to a pre-translocation (PRE) complex, thus giving elongation factor G a second chance to translocate the tRNAs correctly. Binds to ribosomes in a GTP-dependent manner. This Escherichia coli O8 (strain IAI1) protein is Elongation factor 4.